Here is a 494-residue protein sequence, read N- to C-terminus: MNPVSYSELLRLTLPQIALTVAAFFVLACDGMLLRRSPIAVRARIAMLLSVAGSLVALALLPLTAPVQLLDGMLVLDARTGVVQVVLLLFTLAVTLLSGSVLAQQGREVSAFTTHIGEFFALLLFATVAALFLVSTQNLLLIFLAVEFLSLVLYILTAFNKHSRASAEAALKYFLFGGMSAGFLLFGISLLYGVSGSLDLQQIALAASQPDSLLLVAIVLVILGFGFKIAAAPFHLWAPDAYQGAPSLSAGFIASSSKVASFFVFAQVLFIGVASASGNAAWHLSAPGWMPILAAVAVLSMLLGNLAALAQTSLRRLLAYSAIGHAGYLLLGLIAHTPQSLAALLYYVFTYALAVLGAFGVLAILETNGIDSLSSLAGLSRRSPALSACLLVFLLSLAGIPPLVGFFAKFWLFAAALQAAPAFGLLWLVILAILMSVVALFYYLRVLRQVYVVPMAEDATPLSSPTLARITLLVMAALTLLLGCAPNLLMRWLR.

Helical transmembrane passes span 14–34 (LPQI…GMLL), 45–65 (IAML…PLTA), 82–102 (VVQV…GSVL), 116–136 (IGEF…LVST), 139–159 (LLLI…LTAF), 174–194 (FLFG…LYGV), 214–234 (LLVA…AAPF), 262–282 (FFVF…NAAW), 289–309 (WMPI…LAAL), 317–337 (LLAY…IAHT), 344–364 (LLYY…VLAI), 388–408 (ACLL…GFFA), 422–442 (AFGL…ALFY), and 470–490 (ITLL…NLLM).

The protein belongs to the complex I subunit 2 family. In terms of assembly, NDH-1 is composed of 14 different subunits. Subunits NuoA, H, J, K, L, M, N constitute the membrane sector of the complex.

The protein resides in the cell inner membrane. The catalysed reaction is a quinone + NADH + 5 H(+)(in) = a quinol + NAD(+) + 4 H(+)(out). In terms of biological role, NDH-1 shuttles electrons from NADH, via FMN and iron-sulfur (Fe-S) centers, to quinones in the respiratory chain. The immediate electron acceptor for the enzyme in this species is believed to be ubiquinone. Couples the redox reaction to proton translocation (for every two electrons transferred, four hydrogen ions are translocated across the cytoplasmic membrane), and thus conserves the redox energy in a proton gradient. The sequence is that of NADH-quinone oxidoreductase subunit N 2 from Acidobacterium capsulatum (strain ATCC 51196 / DSM 11244 / BCRC 80197 / JCM 7670 / NBRC 15755 / NCIMB 13165 / 161).